The primary structure comprises 355 residues: DNA polymerase IV (355 aa).

Residues 7-188 (IIHIDMDCFY…LPVRKLFGVG (182 aa)) enclose the UmuC domain. 2 residues coordinate Mg(2+): D11 and D106. The active site involves E107.

This sequence belongs to the DNA polymerase type-Y family. Monomer. It depends on Mg(2+) as a cofactor.

It localises to the cytoplasm. The catalysed reaction is DNA(n) + a 2'-deoxyribonucleoside 5'-triphosphate = DNA(n+1) + diphosphate. Functionally, poorly processive, error-prone DNA polymerase involved in untargeted mutagenesis. Copies undamaged DNA at stalled replication forks, which arise in vivo from mismatched or misaligned primer ends. These misaligned primers can be extended by PolIV. Exhibits no 3'-5' exonuclease (proofreading) activity. May be involved in translesional synthesis, in conjunction with the beta clamp from PolIII. This chain is DNA polymerase IV, found in Legionella pneumophila (strain Lens).